Consider the following 260-residue polypeptide: Hemin import ATP-binding protein HmuV (260 aa).

Positions 6–242 (LHADNLHYRA…VQLRACYQAD (237 aa)) constitute an ABC transporter domain. 38-45 (GPNGAGKS) serves as a coordination point for ATP.

The protein belongs to the ABC transporter superfamily. Heme (hemin) importer (TC 3.A.1.14.5) family. The complex is composed of two ATP-binding proteins (HmuV), two transmembrane proteins (HmuU) and a solute-binding protein (HmuT).

It localises to the cell inner membrane. Part of the ABC transporter complex HmuTUV involved in hemin import. Responsible for energy coupling to the transport system. The chain is Hemin import ATP-binding protein HmuV from Sodalis glossinidius (strain morsitans).